The sequence spans 340 residues: Trimethylamine N-oxide transport system ATP-binding protein TmoW (340 aa).

Residues 32–268 (GRSFDDIRAD…PTTGYVAKFT (237 aa)) form the ABC transporter domain. 64–71 (GLSGSGKS) serves as a coordination point for ATP.

It belongs to the ABC transporter superfamily. In terms of assembly, the complex is probably composed of two ATP-binding proteins (TmoW), two transmembrane proteins (TmoV) and a solute-binding protein (TmoX).

Its subcellular location is the cell inner membrane. The catalysed reaction is a quaternary ammonium(out) + ATP + H2O = a quaternary ammonium(in) + ADP + phosphate + H(+). Part of the ABC transporter complex TmoXWV involved in trimethylamine N-oxide (TMAO) import. Responsible for energy coupling to the transport system. Is specific for TMAO and essential for TMAO metabolism. In Ruegeria pomeroyi (strain ATCC 700808 / DSM 15171 / DSS-3) (Silicibacter pomeroyi), this protein is Trimethylamine N-oxide transport system ATP-binding protein TmoW.